Reading from the N-terminus, the 45-residue chain is MKVSSSIKADPSKGDKLVRRKGRLYVINKIDPNRKQRQAGPARKK.

The disordered stretch occupies residues 1–20 (MKVSSSIKADPSKGDKLVRR).

The protein belongs to the bacterial ribosomal protein bL36 family.

This is Large ribosomal subunit protein bL36 from Chlamydia abortus (strain DSM 27085 / S26/3) (Chlamydophila abortus).